The chain runs to 430 residues: Dihydroorotase (430 aa).

Residues His60 and His62 each coordinate Zn(2+). Substrate contacts are provided by residues 62-64 (HLR) and Asn94. Residues Asp152, His179, His232, and Asp305 each contribute to the Zn(2+) site. Residue Asp305 is part of the active site. Residues His309 and 323–324 (FG) contribute to the substrate site.

It belongs to the metallo-dependent hydrolases superfamily. DHOase family. Class I DHOase subfamily. The cofactor is Zn(2+).

The enzyme catalyses (S)-dihydroorotate + H2O = N-carbamoyl-L-aspartate + H(+). It functions in the pathway pyrimidine metabolism; UMP biosynthesis via de novo pathway; (S)-dihydroorotate from bicarbonate: step 3/3. In terms of biological role, catalyzes the reversible cyclization of carbamoyl aspartate to dihydroorotate. The sequence is that of Dihydroorotase from Solibacter usitatus (strain Ellin6076).